We begin with the raw amino-acid sequence, 218 residues long: Peroxynitrite isomerase 2 (218 aa).

A disordered region spans residues 1-24 (MTPAGDTPERGSGDRAVAEAAERA). Basic and acidic residues predominate over residues 7-24 (TPERGSGDRAVAEAAERA). The short motif at 65–71 (GVWRGEG) is the GXWXGXG element. Positions 181 and 208 each coordinate heme b.

It belongs to the nitrobindin family. Homodimer. It depends on heme b as a cofactor.

The enzyme catalyses peroxynitrite = nitrate. It functions in the pathway nitrogen metabolism. In terms of biological role, heme-binding protein able to scavenge peroxynitrite and to protect free L-tyrosine against peroxynitrite-mediated nitration, by acting as a peroxynitrite isomerase that converts peroxynitrite to nitrate. Therefore, this protein likely plays a role in peroxynitrite sensing and in the detoxification of reactive nitrogen and oxygen species (RNS and ROS, respectively). Is able to bind nitric oxide (NO) in vitro, but may act as a sensor of peroxynitrite levels in vivo. In Mycolicibacterium smegmatis (strain ATCC 700084 / mc(2)155) (Mycobacterium smegmatis), this protein is Peroxynitrite isomerase 2.